The sequence spans 371 residues: Queuine tRNA-ribosyltransferase (371 aa).

Residue aspartate 90 is the Proton acceptor of the active site. Substrate-binding positions include aspartate 90–phenylalanine 94, aspartate 144, glutamine 189, and glycine 215. The segment at glycine 246–asparagine 252 is RNA binding. Aspartate 265 acts as the Nucleophile in catalysis. The interval threonine 270–arginine 274 is RNA binding; important for wobble base 34 recognition. Zn(2+) is bound by residues cysteine 303, cysteine 305, cysteine 308, and histidine 334.

It belongs to the queuine tRNA-ribosyltransferase family. In terms of assembly, homodimer. Within each dimer, one monomer is responsible for RNA recognition and catalysis, while the other monomer binds to the replacement base PreQ1. Requires Zn(2+) as cofactor.

It carries out the reaction 7-aminomethyl-7-carbaguanine + guanosine(34) in tRNA = 7-aminomethyl-7-carbaguanosine(34) in tRNA + guanine. It participates in tRNA modification; tRNA-queuosine biosynthesis. In terms of biological role, catalyzes the base-exchange of a guanine (G) residue with the queuine precursor 7-aminomethyl-7-deazaguanine (PreQ1) at position 34 (anticodon wobble position) in tRNAs with GU(N) anticodons (tRNA-Asp, -Asn, -His and -Tyr). Catalysis occurs through a double-displacement mechanism. The nucleophile active site attacks the C1' of nucleotide 34 to detach the guanine base from the RNA, forming a covalent enzyme-RNA intermediate. The proton acceptor active site deprotonates the incoming PreQ1, allowing a nucleophilic attack on the C1' of the ribose to form the product. After dissociation, two additional enzymatic reactions on the tRNA convert PreQ1 to queuine (Q), resulting in the hypermodified nucleoside queuosine (7-(((4,5-cis-dihydroxy-2-cyclopenten-1-yl)amino)methyl)-7-deazaguanosine). The protein is Queuine tRNA-ribosyltransferase of Helicobacter acinonychis (strain Sheeba).